Here is a 502-residue protein sequence, read N- to C-terminus: Carbon catabolite-derepressing protein kinase (502 aa).

Residues Tyr-14–Phe-269 form the Protein kinase domain. ATP contacts are provided by residues Leu-20–Val-28 and Lys-43. Residue Asp-140 is the Proton acceptor of the active site. The residue at position 173 (Thr-173) is a Phosphothreonine; by autocatalysis. A UBA domain is found at Met-290 to Asp-330. In terms of domain architecture, KA1 spans Asn-453–Val-501.

The protein belongs to the protein kinase superfamily. CAMK Ser/Thr protein kinase family. SNF1 subfamily.

It carries out the reaction L-seryl-[protein] + ATP = O-phospho-L-seryl-[protein] + ADP + H(+). The enzyme catalyses L-threonyl-[protein] + ATP = O-phospho-L-threonyl-[protein] + ADP + H(+). In terms of biological role, essential for release from glucose repression. The sequence is that of Carbon catabolite-derepressing protein kinase (RKIN1) from Secale cereale (Rye).